A 218-amino-acid chain; its full sequence is Small ribosomal subunit protein uS3 (218 aa).

Positions L38–K106 constitute a KH type-2 domain.

Belongs to the universal ribosomal protein uS3 family. Part of the 30S ribosomal subunit. Forms a tight complex with proteins S10 and S14.

Its function is as follows. Binds the lower part of the 30S subunit head. Binds mRNA in the 70S ribosome, positioning it for translation. The sequence is that of Small ribosomal subunit protein uS3 from Legionella pneumophila (strain Lens).